The sequence spans 110 residues: Antimicrobial peptide microplusin (110 aa).

A signal peptide spans 1 to 20; it reads MKAIFVSALLVVALVASTSA. Disulfide bonds link Cys26–Cys72, Cys39–Cys100, and Cys61–Cys66.

In terms of tissue distribution, expressed in the hemocytes, fat body and ovaries.

It localises to the secreted. Its function is as follows. Has bacteriostatic activity against the Gram-positive bacterium M.luteus, but not against Gram-negative bacterium E.coli SBS363. Has fungistatic activity against C.neoformans, but not C.albicans. Binds and sequesters copper and iron ions. Copper-chelating is crucial for antimicrobial activity against M.luteus. This is Antimicrobial peptide microplusin from Rhipicephalus microplus (Cattle tick).